A 114-amino-acid polypeptide reads, in one-letter code: Large ribosomal subunit protein bL19 (114 aa).

Belongs to the bacterial ribosomal protein bL19 family.

Functionally, this protein is located at the 30S-50S ribosomal subunit interface and may play a role in the structure and function of the aminoacyl-tRNA binding site. The chain is Large ribosomal subunit protein bL19 from Acetivibrio thermocellus (strain ATCC 27405 / DSM 1237 / JCM 9322 / NBRC 103400 / NCIMB 10682 / NRRL B-4536 / VPI 7372) (Clostridium thermocellum).